A 388-amino-acid polypeptide reads, in one-letter code: Galactokinase (388 aa).

33–36 contacts substrate; it reads EHTD. Residues Ser67 and 125–131 contribute to the ATP site; that span reads GAGLSSS. Mg(2+) contacts are provided by Ser131 and Glu163. Residue Asp175 is the Proton acceptor of the active site. Tyr225 contacts substrate.

Belongs to the GHMP kinase family. GalK subfamily.

It localises to the cytoplasm. It carries out the reaction alpha-D-galactose + ATP = alpha-D-galactose 1-phosphate + ADP + H(+). It participates in carbohydrate metabolism; galactose metabolism. In terms of biological role, catalyzes the transfer of the gamma-phosphate of ATP to D-galactose to form alpha-D-galactose-1-phosphate (Gal-1-P). The chain is Galactokinase from Limosilactobacillus fermentum (strain NBRC 3956 / LMG 18251) (Lactobacillus fermentum).